The sequence spans 286 residues: Putative quercetin 2,3-dioxygenase PA2418 (286 aa).

Residues His-61, His-63, His-105, and Glu-107 each coordinate a divalent metal cation.

The protein belongs to the pirin family. A divalent metal cation serves as cofactor.

The enzyme catalyses quercetin + O2 = 2-(3,4-dihydroxybenzoyloxy)-4,6-dihydroxybenzoate + CO. It functions in the pathway flavonoid metabolism; quercetin degradation. Putative quercetin 2,3-dioxygenase. The sequence is that of Putative quercetin 2,3-dioxygenase PA2418 from Pseudomonas aeruginosa (strain ATCC 15692 / DSM 22644 / CIP 104116 / JCM 14847 / LMG 12228 / 1C / PRS 101 / PAO1).